The following is a 385-amino-acid chain: MSEPAILVLADGSVFHGTSIGAKGHTVGEVVFNTAMTGYQEILTDPSYFRQIVTLTYPHIGNTGTNLEDCEANHVYASGLIIRDLPLLHSNFRSSMSLRDYLQTHNVVAIADIDTRRLTRILRDKGAQAGCIMTGEIDEAKALELAKSFGSMAGKDLAQEVSTGEIFTWTSGQWQLGKGFIEQTQAEFNVVAYDFGVKHNILRMLAERGCKITVVPAKTSAEQVLALNPDGIFLSNGPGDPEPCDYAISAIQTLLASKKPIFGICLGHQLLGLAAGGKTKKMAFGHHGANHPVQDLNTQKVFITSQNHGFEVDEASLPSHVRVTHRSLFDNSVQGIELSDQSAFSFQGHPEASPGPNDVAYLFDKFINEMRKANLSQLSTYVAHH.

The interval 1–185 is CPSase; that stretch reads MSEPAILVLA…LGKGFIEQTQ (185 aa). Residues Ser-47, Gly-237, and Gly-239 each coordinate L-glutamine. The 188-residue stretch at 189–376 folds into the Glutamine amidotransferase type-1 domain; the sequence is NVVAYDFGVK…INEMRKANLS (188 aa). Cys-265 serves as the catalytic Nucleophile. Leu-266, Gln-269, Asn-307, Gly-309, and Phe-310 together coordinate L-glutamine. Active-site residues include His-349 and Glu-351.

Belongs to the CarA family. As to quaternary structure, composed of two chains; the small (or glutamine) chain promotes the hydrolysis of glutamine to ammonia, which is used by the large (or ammonia) chain to synthesize carbamoyl phosphate. Tetramer of heterodimers (alpha,beta)4.

It catalyses the reaction hydrogencarbonate + L-glutamine + 2 ATP + H2O = carbamoyl phosphate + L-glutamate + 2 ADP + phosphate + 2 H(+). The enzyme catalyses L-glutamine + H2O = L-glutamate + NH4(+). The protein operates within amino-acid biosynthesis; L-arginine biosynthesis; carbamoyl phosphate from bicarbonate: step 1/1. Its pathway is pyrimidine metabolism; UMP biosynthesis via de novo pathway; (S)-dihydroorotate from bicarbonate: step 1/3. In terms of biological role, small subunit of the glutamine-dependent carbamoyl phosphate synthetase (CPSase). CPSase catalyzes the formation of carbamoyl phosphate from the ammonia moiety of glutamine, carbonate, and phosphate donated by ATP, constituting the first step of 2 biosynthetic pathways, one leading to arginine and/or urea and the other to pyrimidine nucleotides. The small subunit (glutamine amidotransferase) binds and cleaves glutamine to supply the large subunit with the substrate ammonia. This is Carbamoyl phosphate synthase small chain from Pasteurella multocida (strain Pm70).